The chain runs to 378 residues: Succinyl-diaminopimelate desuccinylase (378 aa).

A Zn(2+)-binding site is contributed by histidine 68. The active site involves aspartate 70. Position 102 (aspartate 102) interacts with Zn(2+). Catalysis depends on glutamate 136, which acts as the Proton acceptor. Zn(2+)-binding residues include glutamate 137, glutamate 165, and histidine 351.

The protein belongs to the peptidase M20A family. DapE subfamily. Homodimer. Requires Zn(2+) as cofactor. Co(2+) is required as a cofactor.

It carries out the reaction N-succinyl-(2S,6S)-2,6-diaminopimelate + H2O = (2S,6S)-2,6-diaminopimelate + succinate. Its pathway is amino-acid biosynthesis; L-lysine biosynthesis via DAP pathway; LL-2,6-diaminopimelate from (S)-tetrahydrodipicolinate (succinylase route): step 3/3. In terms of biological role, catalyzes the hydrolysis of N-succinyl-L,L-diaminopimelic acid (SDAP), forming succinate and LL-2,6-diaminopimelate (DAP), an intermediate involved in the bacterial biosynthesis of lysine and meso-diaminopimelic acid, an essential component of bacterial cell walls. The protein is Succinyl-diaminopimelate desuccinylase of Pseudomonas syringae pv. syringae.